Consider the following 476-residue polypeptide: GTPase Der (476 aa).

2 consecutive EngA-type G domains span residues 3–167 (FTVA…GEER) and 205–380 (LRVA…KVWN). Residues 9–16 (GRPNVGKS), 56–60 (DTAGL), 119–122 (NKSE), 211–218 (GRPNAGKS), 258–262 (DTAGM), and 323–326 (NKWD) contribute to the GTP site. One can recognise a KH-like domain in the interval 381 to 465 (RRISTARLNR…PIRVHFRASE (85 aa)).

It belongs to the TRAFAC class TrmE-Era-EngA-EngB-Septin-like GTPase superfamily. EngA (Der) GTPase family. Associates with the 50S ribosomal subunit.

GTPase that plays an essential role in the late steps of ribosome biogenesis. The sequence is that of GTPase Der from Rhizobium meliloti (strain 1021) (Ensifer meliloti).